A 564-amino-acid chain; its full sequence is Hsp70-Hsp90 organising protein (564 aa).

TPR repeat units follow at residues 7-40 (AQRL…DPLD), 42-74 (VLYS…KKDW), and 76-108 (KGYI…DPNN). A coiled-coil region spans residues 197 to 239 (EGNDAEERQRQQREEEERRKKKEEEERKKKEEEEMKKQNRTPE). The segment at 199–247 (NDAEERQRQQREEEERRKKKEEEERKKKEEEEMKKQNRTPEQIQGDEHK) is disordered. Residues 201-233 (AEERQRQQREEEERRKKKEEEERKKKEEEEMKK) show a composition bias toward basic and acidic residues. TPR repeat units lie at residues 243-276 (GDEH…NPND), 278-310 (MYHY…RYNF), 318-351 (AKLY…DNNR), 378-411 (AEEH…NPND), 413-445 (KLYS…DPTF), and 446-479 (VKAY…DPNN). Positions 513 to 552 (DPEIQQIISDPQFQIILQKLNENPNSISEYIKDPKIFNGL) constitute an STI1 domain.

As to quaternary structure, monomer. Homodimer. Forms a complex composed of HOP and chaperones HSP70 and HSP90; the interaction is stronger in the absence of ATP. Interacts (via TPR 1, 2, 3, 7, 8 and 9 repeats) with HSP70 (via C-terminus); the interaction is direct and is stronger in the absence of ATP. Interacts (via TPR 4, 5 and 6 repeats) with HSP90 (via C-terminus); the interaction is direct.

The protein localises to the cytoplasm. In terms of biological role, acts as a co-chaperone and mediates the association of the chaperones HSP70 and HSP90 probably facilitating substrate transfer from HSP70 to HSP90. Stimulates HSP70 ATPase activity and, in contrast, inhibits HSP90 ATPase activity. This Plasmodium falciparum (isolate 3D7) protein is Hsp70-Hsp90 organising protein.